Reading from the N-terminus, the 146-residue chain is Large ribosomal subunit protein uL15y (146 aa).

2 stretches are compositionally biased toward basic residues: residues 1–14 (MATALKKNRKKRGH) and 21–30 (RIGKHRKHPG). The disordered stretch occupies residues 1 to 38 (MATALKKNRKKRGHVSAGHGRIGKHRKHPGGRGNAGGM).

Belongs to the universal ribosomal protein uL15 family.

The protein is Large ribosomal subunit protein uL15y (RPL27AB) of Arabidopsis thaliana (Mouse-ear cress).